A 457-amino-acid polypeptide reads, in one-letter code: Ribosomal protein uS12 methylthiotransferase RimO (457 aa).

Residues 6 to 116 (PKVGFVSLGC…VMEAVHAALP (111 aa)) enclose the MTTase N-terminal domain. Positions 15, 51, 80, 147, 151, and 154 each coordinate [4Fe-4S] cluster. The Radical SAM core domain maps to 133–371 (LTPRHYAYLK…AKQAQISALR (239 aa)). The region spanning 373 to 441 (ESKIGSVQQC…EHDLFGDALP (69 aa)) is the TRAM domain.

It belongs to the methylthiotransferase family. RimO subfamily. [4Fe-4S] cluster serves as cofactor.

It localises to the cytoplasm. The catalysed reaction is L-aspartate(89)-[ribosomal protein uS12]-hydrogen + (sulfur carrier)-SH + AH2 + 2 S-adenosyl-L-methionine = 3-methylsulfanyl-L-aspartate(89)-[ribosomal protein uS12]-hydrogen + (sulfur carrier)-H + 5'-deoxyadenosine + L-methionine + A + S-adenosyl-L-homocysteine + 2 H(+). Its function is as follows. Catalyzes the methylthiolation of an aspartic acid residue of ribosomal protein uS12. The sequence is that of Ribosomal protein uS12 methylthiotransferase RimO from Xanthomonas axonopodis pv. citri (strain 306).